Here is a 622-residue protein sequence, read N- to C-terminus: ABC transporter permease protein YxdM (622 aa).

Transmembrane regions (helical) follow at residues 20 to 40 (AFFL…MFLF), 56 to 76 (GLTA…LYSV), 118 to 138 (AGII…AYIL), 154 to 174 (ITAC…ILFV), 195 to 215 (PSVL…GMVL), 219 to 239 (VHGA…YFFF), 279 to 299 (LFFI…VLAM), 498 to 518 (TVQL…VFFV), 558 to 578 (IQLA…TLFA), and 590 to 610 (VAGP…LFFL).

The protein belongs to the ABC-4 integral membrane protein family. As to quaternary structure, the complex is composed of two ATP-binding proteins (YxdL) and two transmembrane proteins (YxdM).

The protein localises to the cell membrane. Part of the ABC transporter complex YxdLM which could be involved in peptide resistance. The chain is ABC transporter permease protein YxdM (yxdM) from Bacillus subtilis (strain 168).